Reading from the N-terminus, the 1829-residue chain is Sodium channel protein type 4 subunit alpha A (1829 aa).

Residues 1–124 lie on the Cytoplasmic side of the membrane; that stretch reads MARLLPPTGT…RGAIKILIHS (124 aa). The interval 32 to 52 is disordered; that stretch reads STREELEGAEEEPQAPSSDLE. The I repeat unit spans residues 106–421; the sequence is CISPFSIVRR…VVAMAYDEQN (316 aa). The chain crosses the membrane as a helical span at residues 125–143; the sequence is LFSMFIMITILSNCVFMTM. Topologically, residues 144–150 are extracellular; sequence SNPPAWS. A helical membrane pass occupies residues 151–171; sequence KTVEYVFTGIYTFEATVKVLS. At 172 to 185 the chain is on the cytoplasmic side; it reads RGFCIGPFTFLRDP. A helical transmembrane segment spans residues 186–203; sequence WNWLDFMVISMAYVTEFV. The Extracellular segment spans residues 204–209; that stretch reads DLGNVS. N-linked (GlcNAc...) asparagine glycosylation occurs at asparagine 207. Residues 210–226 traverse the membrane as a helical segment; sequence ALRTFRVLRALKTITVI. The Cytoplasmic segment spans residues 227–245; it reads PGLKTIVGALIQSVKKMID. A helical transmembrane segment spans residues 246–265; the sequence is VMILTIFALAVFALIGLQLF. The Extracellular portion of the chain corresponds to 266 to 358; the sequence is MGNLRQKCIR…PNYGYTSYDN (93 aa). Residues cysteine 273 and cysteine 327 are joined by a disulfide bond. N-linked (GlcNAc...) asparagine glycosylation is found at asparagine 280, asparagine 293, and asparagine 329. Cysteines 336 and 342 form a disulfide. Residues 359-383 constitute an intramembrane region (pore-forming); sequence FGWAFLALFRLMTQDFWENLFQLTL. The Extracellular portion of the chain corresponds to 384–390; that stretch reads RAAGKTY. Residues 391–411 form a helical membrane-spanning segment; the sequence is MIFFVVVIFLGSFYLINLILA. Topologically, residues 412-582 are cytoplasmic; that stretch reads VVAMAYDEQN…KWVHFVVMDP (171 aa). Polar residues predominate over residues 446 to 467; that stretch reads ETGSKASLASQKTQSRGSNRTG. The disordered stretch occupies residues 446–468; that stretch reads ETGSKASLASQKTQSRGSNRTGS. The II repeat unit spans residues 564-836; that stretch reads CCAPWILFKK…QIAIGRITRG (273 aa). Residues 583–601 form a helical membrane-spanning segment; that stretch reads FVDLGITICIVLNTLFMAM. At 602-612 the chain is on the extracellular side; the sequence is EHYPMSPHFEH. Residues 613–632 traverse the membrane as a helical segment; sequence VLSVGNLVFTGIFTAEMVFK. Residues 633–646 lie on the Cytoplasmic side of the membrane; sequence LIAMDPYYYFQVGW. The chain crosses the membrane as a helical span at residues 647 to 666; it reads NIFDSIIVTLSLVELGLANV. At 667–668 the chain is on the extracellular side; the sequence is QG. Residues 669-686 form a helical membrane-spanning segment; sequence LSVLRSFRLLRVFKLAKS. Topologically, residues 687–702 are cytoplasmic; that stretch reads WPTLNMLIKIIGNSVG. A helical membrane pass occupies residues 703–721; sequence ALGNLTLVLAIIVFIFAVV. Residues 722-750 lie on the Extracellular side of the membrane; that stretch reads GMQLFGKSYKDCVCKISEDCELPRWHMND. Cysteine 735 and cysteine 741 form a disulfide bridge. An intramembrane region (pore-forming) is located at residues 751 to 771; it reads FFHSFLIVFRILCGEWIETMW. At 772–782 the chain is on the extracellular side; sequence DCMEVAGASMC. A disulfide bridge connects residues cysteine 773 and cysteine 782. A helical transmembrane segment spans residues 783–801; sequence LIVFMMVMVIGNLVVLNLF. Topologically, residues 802-998 are cytoplasmic; that stretch reads LALLLSSFSG…TCFTIVEHDY (197 aa). Residues 901–957 form a disordered region; sequence SDVEEDEDSESSDEEDAKATLNDGDSSVCSTVDYQPPEPEPEPEEVEEEEPEPEEPE. The segment covering 902–916 has biased composition (acidic residues); the sequence is DVEEDEDSESSDEED. Over residues 923–933 the composition is skewed to polar residues; it reads DGDSSVCSTVD. The span at 939-957 shows a compositional bias: acidic residues; that stretch reads PEPEPEEVEEEEPEPEEPE. One copy of the III repeat lies at 979–1292; that stretch reads WGKKWWNLRR…KKYYNAMKKL (314 aa). The helical transmembrane segment at 999–1016 threads the bilayer; that stretch reads FETFIIFMILLSSGALAF. The Extracellular segment spans residues 1017–1029; that stretch reads EDINIERRRVIKT. The helical transmembrane segment at 1030-1048 threads the bilayer; it reads ILEYADKVFTYIFIVEMLL. Topologically, residues 1049 to 1062 are cytoplasmic; that stretch reads KWVAYGFKTYFTNA. A helical transmembrane segment spans residues 1063–1081; the sequence is WCWLDFLIVDVSLVSLTAN. Over 1082-1089 the chain is Extracellular; the sequence is LMGYSELG. Residues 1090–1108 traverse the membrane as a helical segment; sequence AIKSLRTLRALRPLRALSR. Over 1109–1125 the chain is Cytoplasmic; that stretch reads FEGMRVVVNALVGAIPS. A helical membrane pass occupies residues 1126-1145; that stretch reads IFNVLLVCLIFWLIFSIMGV. Over 1146–1196 the chain is Extracellular; the sequence is NLFAGKFYHCINTTTEERIPMDVVNNKSDCMALMYTNEVRWVNVKVNYDNV. Cysteine 1155 and cysteine 1175 form a disulfide bridge. N-linked (GlcNAc...) asparagine glycosylation is found at asparagine 1157 and asparagine 1171. The segment at residues 1197-1218 is an intramembrane region (pore-forming); that stretch reads GLGYLSLLQIATFKGWMDIMYA. Residues 1219-1235 are Extracellular-facing; that stretch reads AVDSREVDEQPSYEINL. Residues 1236–1257 form a helical membrane-spanning segment; the sequence is YMYLYFVIFIIFGSFFTLNLFI. Topologically, residues 1258 to 1320 are cytoplasmic; the sequence is GVIIDNFNQQ…LVFDFISKQF (63 aa). The interval 1276 to 1278 is important for rapid channel inactivation; sequence IFM. Residues 1301-1599 form an IV repeat; that stretch reads IPRPSNIIQG…WEKFDVDATQ (299 aa). A helical membrane pass occupies residues 1321 to 1338; it reads FDIFIMVLICLNMVTMMI. Residues 1339-1349 lie on the Extracellular side of the membrane; the sequence is ETDDQSAEKEY. Residues 1350–1368 traverse the membrane as a helical segment; it reads VLYQINLVFIVVFTSECVL. The Cytoplasmic segment spans residues 1369–1380; sequence KLFALRQYFFTI. The chain crosses the membrane as a helical span at residues 1381-1398; it reads GWNVFDFVVVILSIAGLM. At 1399 to 1411 the chain is on the extracellular side; that stretch reads LSDIIEKYFVSPT. A helical transmembrane segment spans residues 1412–1428; that stretch reads LFRVIRLARIGRVLRLI. The Cytoplasmic portion of the chain corresponds to 1429–1447; sequence RGAKGIRTLLFALMMSLPA. Residues 1448–1465 traverse the membrane as a helical segment; the sequence is LFNIGLLLFLIMFIFSIF. At 1466–1487 the chain is on the extracellular side; it reads GMSNFAYVKKQAGIDDIFNFET. The pore-forming intramembrane region spans 1488-1510; that stretch reads FGGSIICLFEITTSAGWDGLLLP. Over 1511–1540 the chain is Extracellular; that stretch reads ILNSGPPDCDPDFENPGTDVRGNCGNPGMG. A disulfide bond links cysteine 1519 and cysteine 1534. Residues 1541 to 1563 form a helical membrane-spanning segment; sequence IMFFCSYIIMSFLVVVNMYIAII. The Cytoplasmic segment spans residues 1564-1829; the sequence is LENFNNAQEE…NATTIKESIV (266 aa). The 30-residue stretch at 1693–1722 folds into the IQ domain; the sequence is EERAAIAVQRIYRRHLLKRAIRYACFMRRS. The segment at 1765–1786 is disordered; the sequence is PMRPNSQPPKPSQVTQTRASVT.

This sequence belongs to the sodium channel (TC 1.A.1.10) family. Nav1.4/SCN4A subfamily. Voltage-gated sodium (Nav) channels consist of an ion-conducting alpha subunit which is functional on its own associated with regulatory beta subunits. In terms of tissue distribution, expressed in skeletal muscle, brain, spinal cord, and eye.

The protein localises to the cell membrane. It catalyses the reaction Na(+)(in) = Na(+)(out). Functionally, pore-forming subunit of a voltage-gated sodium (Nav) channel that directly mediates the depolarizing phase of action potentials in excitable membranes. Navs, also called VGSCs (voltage-gated sodium channels) or VDSCs (voltage-dependent sodium channels), operate by switching between closed and open conformations depending on the voltage difference across the membrane. In the open conformation they allow Na(+) ions to selectively pass through the pore, along their electrochemical gradient. The influx of Na+ ions provokes membrane depolarization, initiating the propagation of electrical signals throughout cells and tissues. The chain is Sodium channel protein type 4 subunit alpha A (scn4aa) from Danio rerio (Zebrafish).